The primary structure comprises 153 residues: Flagellar assembly factor FliW (153 aa).

It belongs to the FliW family. As to quaternary structure, interacts with translational regulator CsrA and flagellin(s).

The protein localises to the cytoplasm. Its function is as follows. Acts as an anti-CsrA protein, binds CsrA and prevents it from repressing translation of its target genes, one of which is flagellin. Binds to flagellin and participates in the assembly of the flagellum. This Leptospira biflexa serovar Patoc (strain Patoc 1 / Ames) protein is Flagellar assembly factor FliW.